The chain runs to 233 residues: Large ribosomal subunit protein uL1 (233 aa).

Belongs to the universal ribosomal protein uL1 family. In terms of assembly, part of the 50S ribosomal subunit.

Binds directly to 23S rRNA. The L1 stalk is quite mobile in the ribosome, and is involved in E site tRNA release. Functionally, protein L1 is also a translational repressor protein, it controls the translation of the L11 operon by binding to its mRNA. The protein is Large ribosomal subunit protein uL1 of Rhizobium etli (strain CIAT 652).